The following is a 62-amino-acid chain: Cytotoxin homolog (62 aa).

4 cysteine pairs are disulfide-bonded: Cys-3-Cys-22, Cys-15-Cys-40, Cys-44-Cys-55, and Cys-56-Cys-61.

Belongs to the three-finger toxin family. Short-chain subfamily. Orphan group XV sub-subfamily. As to expression, expressed by the venom gland.

It localises to the secreted. The protein resides in the target cell membrane. Has low cytotoxic activity. The polypeptide is Cytotoxin homolog (Naja kaouthia (Monocled cobra)).